A 534-amino-acid chain; its full sequence is Allene oxide synthase 1, chloroplastic (534 aa).

Disordered regions lie at residues 1–31 (MAST…SSYR) and 43–71 (EIPP…LPAQ). A chloroplast-targeting transit peptide spans 1–69 (MASTSLSLPS…SPPVKQAKLP (69 aa)). 2 stretches are compositionally biased toward low complexity: residues 17-31 (SHTS…SSYR) and 43-62 (EIPP…SSPP). Heme b contacts are provided by K149, H180, and K184. (13S)-hydroperoxy-(9Z,11E)-octadecadienoate is bound by residues N337 and K343. N337 contacts (13S)-hydroperoxy-(9Z,11E,15Z)-octadecatrienoate. Residues K485 and C487 each coordinate heme b.

It belongs to the cytochrome P450 family. Heme b is required as a cofactor. As to expression, expressed in flowers. Detected in stems and roots, but not in leaves and fruits under non-inducing conditions.

The protein localises to the plastid. It localises to the chloroplast. It carries out the reaction (13S)-hydroperoxy-(9Z,11E,15Z)-octadecatrienoate = (9Z,13S,15Z)-12,13-epoxyoctadeca-9,11,15-trienoate + H2O. The catalysed reaction is (13S)-hydroperoxy-(9Z,11E)-octadecadienoate = (9Z,13S)-12,13-epoxyoctadeca-9,11-dienoate + H2O. In terms of biological role, cytochrome P450 of the CYP74A subfamily involved in the biosynthesis of jasmonic acid from lipoxygenase-derived hydroperoxides of free fatty acids. Catalyzes the synthesis of unstable allene oxide, which is further converted spontaneously by hydrolysis or cyclization. Can use 13S-hydroperoxy-9(Z),11(E),15(Z)-octadecatrienoic acid (13-HPOT) and 13S-hydroperoxy-9(Z),11(E)-octadecadienoic acid (13-HPOD) as substrates. This is Allene oxide synthase 1, chloroplastic from Solanum lycopersicum (Tomato).